A 366-amino-acid polypeptide reads, in one-letter code: Zinc finger CCCH domain-containing protein 11 (366 aa).

A disordered region spans residues 43-66 (LHQAVQPKPDPTKTAAKKKKEEEK). The stretch at 54–79 (TKTAAKKKKEEEKAREKELNDLFKVA) forms a coiled coil. 2 consecutive C3H1-type zinc fingers follow at residues 90–117 (DPKS…HDLN) and 160–198 (KPTD…HALP). Positions 208–234 (KALLEEESEKIAIEDEIEDQRKKVKTT) form a coiled coil. Residues 293–338 (YERQEESEANEEPSNKNQDEGPSSSTSNGKEVEESDDEDINIDDDL) form a disordered region. The span at 312–321 (EGPSSSTSNG) shows a compositional bias: polar residues. The span at 325 to 338 (EESDDEDINIDDDL) shows a compositional bias: acidic residues.

This chain is Zinc finger CCCH domain-containing protein 11, found in Oryza sativa subsp. japonica (Rice).